Consider the following 779-residue polypeptide: MIDSLNNYNYDVNDSLKVENLTTEDYEEICKRLGRKPNRTELGMFGVMWSEHCCYRNSKPLLANFPTTGKNVLVGPGENAGVIDVGNDQKLVFKIESHNHPSAIEPFQGAATGVGGILRDIFTMGARPIAVLNSLRFGNLDKSSNISLLRGVVSGISHYGNCVGVPTVGGEIYFDDSYSGNPLVNVMALGLLETDEIVCSGAKEVGYPVLYVGNTTGKDGVGGASFASSELNTNSLDNRPAVQVGDPFIEKSLIEACLDAFKTGDVIAAQDMGAAGLTCSSAEMAANGGLGISINLDLVPARENDMTAYQYLLSESQERMLLVVKEEKLNILIEQFKKWGLFANVIGEVISKKEVIISQKNQIVAQIPTSALSDETPINIHKVIKEPPDYLQKKWKWSEDELPIITNNKILSFKDKKQYSLSEIILNLLSNPSIASKSWIYKQYDSQVQSNTVFKPGEADAALLRLRAQDERNKNNNFSGVAASVDCNSRWVLLDPYRGSIAAVAESARNVSCVGAEPLAITNNLNFSSPNTEIGYWQLSSACDGISKACIALETPVTGGNVSLYNESKNKNNQVTPIYPTPVIGMVGKIQNVDKAVSSGWKNINDQIWLIGSYRSESSIGGSSYLDYFHGLITGRPPKINLQDEKYCQTFLRDAISKNYISSSHDISDGGLAIALSECCILSSKGANIQLEEKNARKDNILFSEGGSRIIFSLNKMEETNFLNFVSINNKNFGSNIYVKKIGFVSEANLTINVQDEELCNLRVDELAEKFNNSISNSF.

The active site involves His-52. Tyr-55 and Lys-94 together coordinate ATP. Residue Glu-96 participates in Mg(2+) binding. Substrate is bound by residues 97–100 (SHNH) and Arg-119. His-98 acts as the Proton acceptor in catalysis. A Mg(2+)-binding site is contributed by Asp-120. Gln-243 is a substrate binding site. Residue Asp-271 coordinates Mg(2+). Residue 315 to 317 (ESQ) participates in substrate binding. Positions 523 and 560 each coordinate ATP. Residue Asn-561 participates in Mg(2+) binding. Ser-563 is a substrate binding site.

This sequence belongs to the FGAMS family. In terms of assembly, monomer. Part of the FGAM synthase complex composed of 1 PurL, 1 PurQ and 2 PurS subunits.

It is found in the cytoplasm. It catalyses the reaction N(2)-formyl-N(1)-(5-phospho-beta-D-ribosyl)glycinamide + L-glutamine + ATP + H2O = 2-formamido-N(1)-(5-O-phospho-beta-D-ribosyl)acetamidine + L-glutamate + ADP + phosphate + H(+). It participates in purine metabolism; IMP biosynthesis via de novo pathway; 5-amino-1-(5-phospho-D-ribosyl)imidazole from N(2)-formyl-N(1)-(5-phospho-D-ribosyl)glycinamide: step 1/2. Functionally, part of the phosphoribosylformylglycinamidine synthase complex involved in the purines biosynthetic pathway. Catalyzes the ATP-dependent conversion of formylglycinamide ribonucleotide (FGAR) and glutamine to yield formylglycinamidine ribonucleotide (FGAM) and glutamate. The FGAM synthase complex is composed of three subunits. PurQ produces an ammonia molecule by converting glutamine to glutamate. PurL transfers the ammonia molecule to FGAR to form FGAM in an ATP-dependent manner. PurS interacts with PurQ and PurL and is thought to assist in the transfer of the ammonia molecule from PurQ to PurL. This is Phosphoribosylformylglycinamidine synthase subunit PurL from Prochlorococcus marinus (strain MIT 9515).